The following is an 843-amino-acid chain: Protein P (843 aa).

The tract at residues 1 to 177 (MPLSYQHFRK…FCGSPYSWEQ (177 aa)) is terminal protein domain (TP). Positions 178–346 (DLQHGRLVFQ…YCLCHIVNLI (169 aa)) are spacer. Disordered stretches follow at residues 220–258 (KSRLGPQPPQGQLAGRPQGGSGSIRARVHPSPWGTVGVE) and 292–319 (SKGHSSSGRAVELHHFPPNSSRSQSQGS). Low complexity predominate over residues 308–319 (PPNSSRSQSQGS). The tract at residues 347-690 (DDWGPCAEHG…YLNLYPVARQ (344 aa)) is polymerase/reverse transcriptase domain (RT). A Reverse transcriptase domain is found at 357–600 (EHRIRTPRTP…YSLNFMGYVI (244 aa)). Mg(2+) is bound by residues Asp-429, Asp-551, and Asp-552.

It belongs to the hepadnaviridae P protein family.

It catalyses the reaction DNA(n) + a 2'-deoxyribonucleoside 5'-triphosphate = DNA(n+1) + diphosphate. The catalysed reaction is Endonucleolytic cleavage to 5'-phosphomonoester.. With respect to regulation, activated by host HSP70 and HSP40 in vitro to be able to bind the epsilon loop of the pgRNA. Because deletion of the RNase H region renders the protein partly chaperone-independent, the chaperones may be needed indirectly to relieve occlusion of the RNA-binding site by this domain. Inhibited by several reverse-transcriptase inhibitors: Lamivudine, Adefovir and Entecavir. Functionally, multifunctional enzyme that converts the viral RNA genome into dsDNA in viral cytoplasmic capsids. This enzyme displays a DNA polymerase activity that can copy either DNA or RNA templates, and a ribonuclease H (RNase H) activity that cleaves the RNA strand of RNA-DNA heteroduplexes in a partially processive 3'- to 5'-endonucleasic mode. Neo-synthesized pregenomic RNA (pgRNA) are encapsidated together with the P protein, and reverse-transcribed inside the nucleocapsid. Initiation of reverse-transcription occurs first by binding the epsilon loop on the pgRNA genome, and is initiated by protein priming, thereby the 5'-end of (-)DNA is covalently linked to P protein. Partial (+)DNA is synthesized from the (-)DNA template and generates the relaxed circular DNA (RC-DNA) genome. After budding and infection, the RC-DNA migrates in the nucleus, and is converted into a plasmid-like covalently closed circular DNA (cccDNA). The activity of P protein does not seem to be necessary for cccDNA generation, and is presumably released from (+)DNA by host nuclear DNA repair machinery. This Hepatitis B virus genotype B1 (isolate Japan/Yamagata-2/1998) (HBV-B) protein is Protein P.